The following is a 103-amino-acid chain: Small ribosomal subunit protein uS10 (103 aa).

It belongs to the universal ribosomal protein uS10 family. In terms of assembly, part of the 30S ribosomal subunit.

Involved in the binding of tRNA to the ribosomes. In Pseudoalteromonas translucida (strain TAC 125), this protein is Small ribosomal subunit protein uS10.